The chain runs to 156 residues: Small ribosomal subunit protein uS7 (156 aa).

Belongs to the universal ribosomal protein uS7 family. As to quaternary structure, part of the 30S ribosomal subunit. Contacts proteins S9 and S11.

In terms of biological role, one of the primary rRNA binding proteins, it binds directly to 16S rRNA where it nucleates assembly of the head domain of the 30S subunit. Is located at the subunit interface close to the decoding center, probably blocks exit of the E-site tRNA. The sequence is that of Small ribosomal subunit protein uS7 from Cupriavidus necator (strain ATCC 17699 / DSM 428 / KCTC 22496 / NCIMB 10442 / H16 / Stanier 337) (Ralstonia eutropha).